A 295-amino-acid polypeptide reads, in one-letter code: CBY1-interacting BAR domain-containing protein 1 (295 aa).

The transit peptide at 1–49 (MMSRTPDARARDTQTKQIQENITSVEKHFGDLCQLFAAYVRKTARLRDK) directs the protein to the mitochondrion. The tract at residues 12-222 (DTQTKQIQEN…NVDEEGDLEV (211 aa)) is BAR-like. A coiled-coil region spans residues 111–185 (KREDLKQTQS…KQKIRDIKKV (75 aa)). Over residues 243 to 265 (SKLSLNRTGTSMSKSGTMQSRTS) the composition is skewed to polar residues. Residues 243–295 (SKLSLNRTGTSMSKSGTMQSRTSSRQRKRDDEEDEEEDDEDEDDLEEVTDDEH) are disordered. The span at 273–295 (DEEDEEEDDEDEDDLEEVTDDEH) shows a compositional bias: acidic residues.

Belongs to the CIBAR family.

The protein resides in the cytoplasm. It localises to the cytoskeleton. Its subcellular location is the microtubule organizing center. The protein localises to the centrosome. It is found in the centriole. The protein resides in the cell projection. It localises to the cilium. Its subcellular location is the nucleus. The protein localises to the mitochondrion inner membrane. It is found in the flagellum. In terms of biological role, plays a critical role in regulating mitochondrial ultrastructure and function by maintaining the integrity of mitochondrial morphology, particularly the organization of cristae. Plays a crucial role in ciliogenesis. Plays a key role in the correct positioning of the annulus, a septin-based ring structure in the sperm flagellum, serving both as a physical barrier and a membrane diffusion barrier that separates the midpiece (MP) from the principal piece (PP). The chain is CBY1-interacting BAR domain-containing protein 1 (cibar1) from Danio rerio (Zebrafish).